A 317-amino-acid polypeptide reads, in one-letter code: Pinoresinol reductase 2 (317 aa).

Residues threonine 18, serine 20, leucine 21, arginine 41, lysine 50, serine 90, glycine 91, arginine 95, asparagine 98, and serine 121 each contribute to the NADP(+) site. Methionine 125 is a binding site for (-)-pinoresinol. 2 residues coordinate NADP(+): lysine 144 and phenylalanine 166. The Proton acceptor role is filled by lysine 144. Glycine 178 contacts (-)-pinoresinol.

Belongs to the NmrA-type oxidoreductase family. Isoflavone reductase subfamily. In terms of assembly, forms homodimers. As to expression, expressed in roots. Detected in stems.

The enzyme catalyses (-)-lariciresinol + NADP(+) = (-)-pinoresinol + NADPH + H(+). Functionally, reductase involved in lignan biosynthesis. Unlike conventional pinoresinol reductases that can reduce both pinoresinol and lariciresinol, PRR2 shows a strict substrate selectivity for (-)-pinoresinol. No activity with (+)-pinoresinol or lariciresinol. Abstracts the 4R-hydride from the NADPH cofactor during catalysis. In Arabidopsis thaliana (Mouse-ear cress), this protein is Pinoresinol reductase 2.